Consider the following 104-residue polypeptide: Gallinacin-11 (104 aa).

The first 22 residues, Met1–Gly22, serve as a signal peptide directing secretion. 3 cysteine pairs are disulfide-bonded: Cys30-Cys60, Cys37-Cys53, and Cys43-Cys61.

This sequence belongs to the beta-defensin family. In terms of tissue distribution, detected in outer membrane of the vitelline layer of the egg (at protein level). Expressed in the liver, gall bladder, kidney, testis, ovary and male and female reproductive tracts. Expressed in the ovarian stroma, but not in the ovarian follicles. No expression is detected in bone marrow.

Its subcellular location is the secreted. The protein resides in the cytoplasmic granule. In terms of biological role, has bactericidal activity. The chain is Gallinacin-11 (GAL11) from Gallus gallus (Chicken).